We begin with the raw amino-acid sequence, 316 residues long: Tetrahydromethanopterin S-methyltransferase subunit H (316 aa).

This sequence belongs to the MtrH family. The complex is composed of 8 subunits; MtrA, MtrB, MtrC, MtrD, MtrE, MtrF, MtrG and MtrH.

The catalysed reaction is 5-methyl-5,6,7,8-tetrahydromethanopterin + coenzyme M + 2 Na(+)(in) = 5,6,7,8-tetrahydromethanopterin + methyl-coenzyme M + 2 Na(+)(out). Its pathway is one-carbon metabolism; methanogenesis from CO(2); methyl-coenzyme M from 5,10-methylene-5,6,7,8-tetrahydromethanopterin: step 2/2. Part of a complex that catalyzes the formation of methyl-coenzyme M and tetrahydromethanopterin from coenzyme M and methyl-tetrahydromethanopterin. This is an energy-conserving, sodium-ion translocating step. MtrH catalyzes the transfer of the methyl group from methyl-tetrahydromethanopterin to the corrinoid prosthetic group of MtrA. The chain is Tetrahydromethanopterin S-methyltransferase subunit H from Methanosarcina acetivorans (strain ATCC 35395 / DSM 2834 / JCM 12185 / C2A).